Consider the following 215-residue polypeptide: Peptide methionine sulfoxide reductase MsrA (215 aa).

The active site involves Cys58.

The protein belongs to the MsrA Met sulfoxide reductase family.

The enzyme catalyses L-methionyl-[protein] + [thioredoxin]-disulfide + H2O = L-methionyl-(S)-S-oxide-[protein] + [thioredoxin]-dithiol. The catalysed reaction is [thioredoxin]-disulfide + L-methionine + H2O = L-methionine (S)-S-oxide + [thioredoxin]-dithiol. In terms of biological role, has an important function as a repair enzyme for proteins that have been inactivated by oxidation. Catalyzes the reversible oxidation-reduction of methionine sulfoxide in proteins to methionine. The chain is Peptide methionine sulfoxide reductase MsrA from Pseudomonas syringae pv. tomato (strain ATCC BAA-871 / DC3000).